A 112-amino-acid polypeptide reads, in one-letter code: Mitochondrial import inner membrane translocase subunit TIM14-1 (112 aa).

An N-acetylalanine modification is found at alanine 2. A helical transmembrane segment spans residues 7–23 (AGVAVAATALAGRYGIQ). A J domain is found at 53 to 112 (EAALILGVRESVAAEKVKEAHRKVMVANHPDAGGSHFLASKINEAKDVMLGKTKNSGSAF).

Belongs to the TIM14 family. In terms of assembly, probable component of the PAM complex at least composed of a mitochondrial HSP70 protein, TIMM44 and TIMM14. The complex interacts with the TIMM23 component of the TIM17:23 complex.

It localises to the mitochondrion. Its subcellular location is the mitochondrion inner membrane. In terms of biological role, component of the PAM complex, a complex required for the translocation of transit peptide-containing proteins from the inner membrane into the mitochondrial matrix in an ATP-dependent manner. The polypeptide is Mitochondrial import inner membrane translocase subunit TIM14-1 (TIM14-1) (Arabidopsis thaliana (Mouse-ear cress)).